The following is a 188-amino-acid chain: Protein SYC1 (188 aa).

As to quaternary structure, component of the cleavage and polyadenylation factor (CPF) complex, which is composed of at least PTI1, SYC1, SSU72, GLC7, MPE1, REF2, PFS2, PTA1, YSH1/BRR5, SWD2, CFT2/YDH1, YTH1, CFT1/YHH1, FIP1 and PAP1. Component of the APT complex, which is a subcomplex of CPF, and is composed of PTI1, SYC1, SSU72, GLC7, REF2, PTA1 and SWD2.

It localises to the nucleus. Component of the cleavage and polyadenylation factor (CPF) complex, which plays a key role in polyadenylation-dependent pre-mRNA 3'-end formation and cooperates with cleavage factors including the CFIA complex and NAB4/CFIB. Component of the APT complex, which may be involved in polyadenylation-independent transcript 3'-end formation, including snoRNAs and snRNAs. The protein is Protein SYC1 (SYC1) of Saccharomyces cerevisiae (strain ATCC 204508 / S288c) (Baker's yeast).